The following is a 201-amino-acid chain: FMN-dependent NADH:quinone oxidoreductase (201 aa).

Residues Ser10, 16 to 18, 96 to 99, and 140 to 143 contribute to the FMN site; these read SQS, MYNF, and SRGG.

It belongs to the azoreductase type 1 family. Homodimer. It depends on FMN as a cofactor.

The catalysed reaction is 2 a quinone + NADH + H(+) = 2 a 1,4-benzosemiquinone + NAD(+). The enzyme catalyses N,N-dimethyl-1,4-phenylenediamine + anthranilate + 2 NAD(+) = 2-(4-dimethylaminophenyl)diazenylbenzoate + 2 NADH + 2 H(+). Quinone reductase that provides resistance to thiol-specific stress caused by electrophilic quinones. In terms of biological role, also exhibits azoreductase activity. Catalyzes the reductive cleavage of the azo bond in aromatic azo compounds to the corresponding amines. This chain is FMN-dependent NADH:quinone oxidoreductase, found in Salmonella arizonae (strain ATCC BAA-731 / CDC346-86 / RSK2980).